A 636-amino-acid chain; its full sequence is Nuclear receptor subfamily 2 group C member 1 (636 aa).

A DNA-binding region (nuclear receptor) is located at residues 149–224 (VELCVVCGDK…LGMKQDSVQC (76 aa)). 2 consecutive NR C4-type zinc fingers follow at residues 152-172 (CVVCGDKASGRHYGAVTCEGC) and 188-207 (CRGSKDCVINKHYRNRCQYC). Positions 382 to 623 (ECVGSNSNLT…SIIPYILRME (242 aa)) constitute an NR LBD domain.

This sequence belongs to the nuclear hormone receptor family. NR2 subfamily.

It localises to the nucleus. Its function is as follows. Orphan nuclear receptor. Binds the IR7 element in the promoter of its own gene in an autoregulatory negative feedback mechanism. Primarily repressor of a broad range of genes. Binds to hormone response elements (HREs) consisting of two 5'-AGGTCA-3' half site direct repeat consensus sequences. The polypeptide is Nuclear receptor subfamily 2 group C member 1 (Xenopus tropicalis (Western clawed frog)).